The sequence spans 263 residues: Protein TILLER ANGLE CONTROL 1 (263 aa).

Positions 55-61 match the IGT motif motif; that stretch reads GILAIGT. Positions 243-263 are disordered; the sequence is GKKIHPEQLNGRSNAEGPLTA.

The protein belongs to the TAC family. Highly expressed in leaf sheath pulvinus. Expressed in shoot apical meristem and leaves.

In terms of biological role, involved in the regulation of leaf growth angle. Promotes horizontal shoot growth. This Zea mays (Maize) protein is Protein TILLER ANGLE CONTROL 1.